Reading from the N-terminus, the 402-residue chain is Probable 2,3-bisphosphoglycerate-independent phosphoglycerate mutase (402 aa).

This sequence belongs to the BPG-independent phosphoglycerate mutase family. A-PGAM subfamily.

The enzyme catalyses (2R)-2-phosphoglycerate = (2R)-3-phosphoglycerate. It participates in carbohydrate degradation; glycolysis; pyruvate from D-glyceraldehyde 3-phosphate: step 3/5. Its function is as follows. Catalyzes the interconversion of 2-phosphoglycerate and 3-phosphoglycerate. This is Probable 2,3-bisphosphoglycerate-independent phosphoglycerate mutase from Thermosipho melanesiensis (strain DSM 12029 / CIP 104789 / BI429).